Here is a 338-residue protein sequence, read N- to C-terminus: DNA-directed RNA polymerase subunit alpha (338 aa).

Positions 1–234 (MIHKNWQELI…DQLSIFVNFD (234 aa)) are alpha N-terminal domain (alpha-NTD). Positions 250–338 (FNPLLLKKVD…ELAKKYEDNF (89 aa)) are alpha C-terminal domain (alpha-CTD).

This sequence belongs to the RNA polymerase alpha chain family. Homodimer. The RNAP catalytic core consists of 2 alpha, 1 beta, 1 beta' and 1 omega subunit. When a sigma factor is associated with the core the holoenzyme is formed, which can initiate transcription.

The enzyme catalyses RNA(n) + a ribonucleoside 5'-triphosphate = RNA(n+1) + diphosphate. Its function is as follows. DNA-dependent RNA polymerase catalyzes the transcription of DNA into RNA using the four ribonucleoside triphosphates as substrates. This is DNA-directed RNA polymerase subunit alpha from Jannaschia sp. (strain CCS1).